A 260-amino-acid chain; its full sequence is F-actin-capping protein subunit beta (260 aa).

It belongs to the F-actin-capping protein beta subunit family. Component of the F-actin capping complex, composed of a heterodimer of an alpha and a beta subunit.

The protein resides in the cytoplasm. The protein localises to the cytoskeleton. It is found in the actin patch. In terms of biological role, F-actin-capping proteins bind in a Ca(2+)-independent manner to the fast growing ends of actin filaments (barbed end) thereby blocking the exchange of subunits at these ends. Unlike other capping proteins (such as gelsolin and severin), these proteins do not sever actin filaments. This is F-actin-capping protein subunit beta (CAP2) from Yarrowia lipolytica (strain CLIB 122 / E 150) (Yeast).